The following is a 198-amino-acid chain: dCTP deaminase, dUMP-forming (198 aa).

Residues 115–120 (KSSIAR), Asp-133, 141–143 (TLE), Gln-162, Tyr-175, and Lys-184 each bind dCTP. Glu-143 functions as the Proton donor/acceptor in the catalytic mechanism.

Belongs to the dCTP deaminase family. Homotrimer.

It carries out the reaction dCTP + 2 H2O = dUMP + NH4(+) + diphosphate. It functions in the pathway pyrimidine metabolism; dUMP biosynthesis; dUMP from dCTP: step 1/1. Its function is as follows. Bifunctional enzyme that catalyzes both the deamination of dCTP to dUTP and the hydrolysis of dUTP to dUMP without releasing the toxic dUTP intermediate. The protein is dCTP deaminase, dUMP-forming of Nanoarchaeum equitans (strain Kin4-M).